The following is a 162-amino-acid chain: Proepiregulin (162 aa).

An N-terminal signal peptide occupies residues 1 to 22 (METLPASWVLTLLCLGSHLLQA). The propeptide occupies 23-55 (VISTTVIPSCIPGESEDNCTALVQMEDDPRVAQ). The N-linked (GlcNAc...) asparagine glycan is linked to N40. At 53–112 (VAQVQITKCSSDMDGYCLHGQCIYLVDMREKFCRCEVGYTGLRCEHFFLTVHQPLSKEYV) the chain is on the extracellular side. Residues 57–97 (QITKCSSDMDGYCLHGQCIYLVDMREKFCRCEVGYTGLRCE) form the EGF-like domain. 3 cysteine pairs are disulfide-bonded: C61–C74, C69–C85, and C87–C96. Residues 102–162 (TVHQPLSKEY…TSGDPVLPQV (61 aa)) constitute a propeptide, removed in mature form. A helical transmembrane segment spans residues 113–133 (ALTVILIFLFLIITAGCIYYF). Residues 134-162 (CRWYKNRKSKKSREEYERVTSGDPVLPQV) are Cytoplasmic-facing.

As to quaternary structure, interacts with EGFR and ERBB4.

It is found in the secreted. The protein resides in the extracellular space. The protein localises to the cell membrane. Its function is as follows. Ligand of the EGF receptor/EGFR and ERBB4. Stimulates EGFR and ERBB4 tyrosine phosphorylation. Contributes to inflammation, wound healing, tissue repair, and oocyte maturation by regulating angiogenesis and vascular remodeling and by stimulating cell proliferation. The chain is Proepiregulin (Ereg) from Mus musculus (Mouse).